The primary structure comprises 196 residues: MKEVIIATKNEGKVREFKAMLEPRGYDVKSLLDIGYTPEIEETGQTFEENAVIKAETISKETGKIVIADDSGLSVDYLGGSPGVYSARYAGEEKNDLANLKKLLKELEGVEKEDRSARFRCALAICIPGQETKTVEGSVEGYITEEPRGTNGFGYDPVFLVKDKDQTMAELSSGEKNKISHRAEALKKLSALLDQA.

8–13 (TKNEGK) lines the substrate pocket. Glutamate 41 and aspartate 70 together coordinate Mg(2+). The active-site Proton acceptor is aspartate 70. Substrate-binding positions include serine 71, 153-156 (FGYD), lysine 176, and 181-182 (HR).

It belongs to the HAM1 NTPase family. Homodimer. It depends on Mg(2+) as a cofactor.

The enzyme catalyses XTP + H2O = XMP + diphosphate + H(+). It catalyses the reaction dITP + H2O = dIMP + diphosphate + H(+). It carries out the reaction ITP + H2O = IMP + diphosphate + H(+). Functionally, pyrophosphatase that catalyzes the hydrolysis of nucleoside triphosphates to their monophosphate derivatives, with a high preference for the non-canonical purine nucleotides XTP (xanthosine triphosphate), dITP (deoxyinosine triphosphate) and ITP. Seems to function as a house-cleaning enzyme that removes non-canonical purine nucleotides from the nucleotide pool, thus preventing their incorporation into DNA/RNA and avoiding chromosomal lesions. This Bacillus licheniformis (strain ATCC 14580 / DSM 13 / JCM 2505 / CCUG 7422 / NBRC 12200 / NCIMB 9375 / NCTC 10341 / NRRL NRS-1264 / Gibson 46) protein is dITP/XTP pyrophosphatase.